The primary structure comprises 699 residues: SPX domain-containing membrane protein At4g22990 (699 aa).

Positions 2-145 constitute an SPX domain; sequence VAFGKKLKER…GYRFTNYYVK (144 aa). Helical transmembrane passes span 249–269, 280–300, 317–337, 339–358, 377–397, and 413–433; these read FMSLLLNLVNTFLYMVNTYII, LGAAATVCGVVIGAMAVAQLF, LIFSSIVLFIGNLLYALAFDF, SIAVLLIGRLFCGLGSARAV, AGFVSASALGMACGPALAGLL, and LPGWVMAVAWLIYLVWLAISF. Residues 475-490 are compositionally biased toward acidic residues; the sequence is IEEQGEDECDGSEEAS. Positions 475–494 are disordered; that stretch reads IEEQGEDECDGSEEASEDSR. The next 5 helical transmembrane spans lie at 515-535, 546-566, 578-598, 606-626, and 671-691; these read LLIYFMLKYAMEILLSESSVI, SVAIFLFCLGLTVLPVNLVVG, ILLVSEIMVCVGILLSFHVVV, VCSGLIMFVSAEVLEGVNLSL, and MLLNVTLLPSLVICVLSIVAT.

Belongs to the major facilitator superfamily.

Its subcellular location is the membrane. The chain is SPX domain-containing membrane protein At4g22990 from Arabidopsis thaliana (Mouse-ear cress).